The chain runs to 420 residues: Putative epoxide hydrolase (420 aa).

It belongs to the peptidase S33 family.

It functions in the pathway mycotoxin biosynthesis. Functionally, putative epoxide hydrolase; part of the fragmented gene cluster that mediates the biosynthesis of dothistromin (DOTH), a polyketide toxin very similar in structure to the aflatoxin precursor, versicolorin B. The first step of the pathway is the conversion of acetate to norsolorinic acid (NOR) and requires the fatty acid synthase subunits hexA and hexB, as well as the polyketide synthase pksA. PksA combines a hexanoyl starter unit and 7 malonyl-CoA extender units to synthesize the precursor NOR. The hexanoyl starter unit is provided to the acyl-carrier protein (ACP) domain by the fungal fatty acid synthase hexA/hexB. The second step is the conversion of NOR to averantin (AVN) and requires the norsolorinic acid ketoreductase nor1, which catalyzes the dehydration of norsolorinic acid to form (1'S)-averantin. The cytochrome P450 monooxygenase avnA then catalyzes the hydroxylation of AVN to 5'hydroxyaverantin (HAVN). The next step is performed by adhA that transforms HAVN to averufin (AVF). Averufin might then be converted to hydroxyversicolorone by cypX and avfA. Hydroxyversicolorone is further converted versiconal hemiacetal acetate (VHA) by moxY. VHA is then the substrate for the versiconal hemiacetal acetate esterase est1 to yield versiconal (VAL). Versicolorin B synthase vbsA then converts VAL to versicolorin B (VERB) by closing the bisfuran ring. Then, the activity of the versicolorin B desaturase verB leads to versicolorin A (VERA). DotB, a predicted chloroperoxidase, may perform epoxidation of the A-ring of VERA. Alternatively, a cytochrome P450, such as cypX or avnA could catalyze this step. It is also possible that another, uncharacterized, cytochrome P450 enzyme is responsible for this step. Opening of the epoxide could potentially be achieved by the epoxide hydrolase epoA. However, epoA seems not to be required for DOTH biosynthesis, but other epoxide hydrolases may have the ability to complement this hydrolysis. Alternatively, opening of the epoxide ring could be achieved non-enzymatically. The next step is the deoxygenation of ring A to yield the 5,8-dihydroxyanthraquinone which is most likely catalyzed by the NADPH dehydrogenase encoded by ver1. The last stages of DOTH biosynthesis are proposed to involve hydroxylation of the bisfuran. OrdB and norB might have oxidative roles here. An alternative possibility is that cytochrome P450 monoogenases such as avnA and cypX might perform these steps in addition to previously proposed steps. This is Putative epoxide hydrolase from Dothistroma septosporum (Red band needle blight fungus).